The sequence spans 1142 residues: Envelopment polyprotein (1142 aa).

An N-terminal signal peptide occupies residues 1–21 (MSKFCLCLSLLGVLLLQVCDT). Topologically, residues 22–489 (RSLLELKIEC…LCVPGIHGWS (468 aa)) are lumenal. Intrachain disulfides connect Cys31-Cys156, Cys65-Cys162, Cys114-Cys133, Cys138-Cys143, Cys180-Cys190, and Cys215-Cys253. Asn139 is a glycosylation site (N-linked (GlcNAc...) asparagine; by host). Asn353 carries N-linked (GlcNAc...) asparagine; by host glycosylation. 4 disulfides stabilise this stretch: Cys382–Cys441, Cys386–Cys395, Cys411–Cys430, and Cys458–Cys481. A glycan (N-linked (GlcNAc...) asparagine; by host) is linked at Asn405. A helical membrane pass occupies residues 490 to 510 (TIALLATFCFGWLLIPIISLV). The Cytoplasmic segment spans residues 511–633 (SIKIMLLFAY…LSVFRYRSRC (123 aa)). Residues 522–539 (CSKYSNDSKFRLLIEKVK) form a binding to the ribonucleoprotein region. CCHC-type zinc fingers lie at residues 551 to 571 (CEVCQQECEMAKELESHKKSC) and 576 to 597 (CPYCMNPTESTESALQAHFKVC). Binding to the ribonucleoprotein regions lie at residues 594-611 (FKVCKLTTRFQENLRKSL), 598-609 (KLTTRFQENLRK), and 617-631 (KRGCYRTLSVFRYRS). The ITAM domain occupies 617–640 (KRGCYRTLSVFRYRSRCFVGLVWC). A YxxL motif is present at residues 621–624 (YRTL). Residues 634-654 (FVGLVWCILLVLELVIWAASA) form a helical membrane-spanning segment. Topologically, residues 655–1110 (DTVEIKTGWT…EWLMGILSGN (456 aa)) are lumenal. Cystine bridges form between Cys741–Cys776, Cys745–Cys783, Cys757–Cys890, Cys771–Cys901, Cys786–Cys909, Cys812–Cys821, Cys829–Cys838, and Cys869–Cys873. The segment at 763–783 (YEFETGWGCNPGDCPGVGTGC) is fusion loop. Asn933 carries an N-linked (GlcNAc...) asparagine; by host glycan. 5 disulfides stabilise this stretch: Cys975-Cys1005, Cys998-Cys1050, Cys1015-Cys1020, Cys1051-Cys1056, and Cys1090-Cys1094. Residues 1111 to 1131 (WMVVAVLVVLLILSIFLFSLC) form a helical membrane-spanning segment. Positions 1127–1142 (LFSLCCPRRVVHKKSS) are binding to the ribonucleoprotein. Residues 1132 to 1142 (CPRRVVHKKSS) are Cytoplasmic-facing.

This sequence belongs to the hantavirus envelope glycoprotein family. In terms of assembly, homodimer. Homotetramer; forms heterotetrameric Gn-Gc spikes in the pre-fusion conformation. Interacts (via C-terminus) with the nucleoprotein. Interacts with host TUFM; this interaction contributes to the virus-induced degradation of mitochondria by autophagy, which leads to degradation of host MAVS and inhibition of type I interferon (IFN) responses. Interacts with host MAP1LC3B; this interaction contributes to the virus-induced degradation of mitochondria by autophagy, which leads to degradation of host MAVS and inhibition of type I interferon (IFN) responses. As to quaternary structure, homodimer. Homotetramer; forms heterotetrameric Gn-Gc spikes in the pre-fusion conformation. Homotrimer; forms homotrimer in the post-fusion conformation at acidic pH. Interacts (via C-terminus) with the nucleoprotein. Envelope polyprotein precursor is quickly cleaved in vivo just after synthesis, presumably by host signal peptidase.

The protein resides in the virion membrane. It is found in the host cell surface. The protein localises to the host Golgi apparatus membrane. Its subcellular location is the host endoplasmic reticulum membrane. It localises to the host mitochondrion. Forms homotetramers with glycoprotein C at the surface of the virion. Attaches the virion to host cell receptors including integrin alpha5/ITGB1. This attachment induces virion internalization predominantly through clathrin-dependent endocytosis. Mediates the assembly and budding of infectious virus particles through its interaction with the nucleocapsid protein and the viral genome. May dysregulate normal immune and endothelial cell responses through an ITAM motif. Translocates to mitochondria, binds to host TUFM and recruits MAP1LC3B. These interactions induce mitochondrial autophagy and therefore destruction of host MAVS leading to inhibition of type I interferon (IFN) responses. Concomitant breakdown of glycoprotein N is apparently prevented by the nucleoprotein that may inhibit Gn-stimulated autophagosome-lysosome fusion. Interacts with the viral genomic RNA. Functionally, forms homotetramers with glycoprotein N at the surface of the virion. Attaches the virion to host cell receptors including integrin ITGAV/ITGB3. This attachment induces virion internalization predominantly through clathrin-dependent endocytosis. Class II fusion protein that promotes fusion of viral membrane with host endosomal membrane after endocytosis of the virion. The polypeptide is Envelopment polyprotein (GP) (Microtus pennsylvanicus (Meadow vole)).